The primary structure comprises 651 residues: UvrABC system protein B (651 aa).

In terms of domain architecture, Helicase ATP-binding spans 25 to 411 (RGISCGAKEQ…TGGVATEQLI (387 aa)). 38-45 (GVTGSGKT) serves as a coordination point for ATP. The short motif at 91–114 (YYDYYQPEAYIPQSDVYIEKDALI) is the Beta-hairpin element. The Helicase C-terminal domain maps to 427–591 (DGQIHDVMCE…IVPRTIQKPV (165 aa)). Residues 593 to 615 (TSLSERVGSSRKKVSRDTNTDPA) are disordered. In terms of domain architecture, UVR spans 616–651 (NRDIVELQKEMLLCAENLDFERAVEIRNEIKRLTAP).

Belongs to the UvrB family. Forms a heterotetramer with UvrA during the search for lesions. Interacts with UvrC in an incision complex.

The protein localises to the cytoplasm. In terms of biological role, the UvrABC repair system catalyzes the recognition and processing of DNA lesions. A damage recognition complex composed of 2 UvrA and 2 UvrB subunits scans DNA for abnormalities. Upon binding of the UvrA(2)B(2) complex to a putative damaged site, the DNA wraps around one UvrB monomer. DNA wrap is dependent on ATP binding by UvrB and probably causes local melting of the DNA helix, facilitating insertion of UvrB beta-hairpin between the DNA strands. Then UvrB probes one DNA strand for the presence of a lesion. If a lesion is found the UvrA subunits dissociate and the UvrB-DNA preincision complex is formed. This complex is subsequently bound by UvrC and the second UvrB is released. If no lesion is found, the DNA wraps around the other UvrB subunit that will check the other stand for damage. This is UvrABC system protein B from Anaplasma marginale (strain St. Maries).